A 335-amino-acid chain; its full sequence is Tetraacyldisaccharide 4'-kinase (335 aa).

51–58 (HVGGAGKT) serves as a coordination point for ATP.

The protein belongs to the LpxK family.

The enzyme catalyses a lipid A disaccharide + ATP = a lipid IVA + ADP + H(+). The protein operates within glycolipid biosynthesis; lipid IV(A) biosynthesis; lipid IV(A) from (3R)-3-hydroxytetradecanoyl-[acyl-carrier-protein] and UDP-N-acetyl-alpha-D-glucosamine: step 6/6. In terms of biological role, transfers the gamma-phosphate of ATP to the 4'-position of a tetraacyldisaccharide 1-phosphate intermediate (termed DS-1-P) to form tetraacyldisaccharide 1,4'-bis-phosphate (lipid IVA). This Nitrobacter hamburgensis (strain DSM 10229 / NCIMB 13809 / X14) protein is Tetraacyldisaccharide 4'-kinase.